The primary structure comprises 452 residues: Bifunctional protein GlmU (452 aa).

The interval 1–224 (MNIVILAAGM…EWETHGVNSK (224 aa)) is pyrophosphorylase. UDP-N-acetyl-alpha-D-glucosamine is bound by residues 6-9 (LAAG), lysine 20, glutamine 71, 76-77 (GT), 98-100 (YGD), glycine 135, glutamate 149, asparagine 164, and asparagine 222. Aspartate 100 contacts Mg(2+). Asparagine 222 lines the Mg(2+) pocket. The segment at 225–245 (VQLAELERIHQRNIAHALLEQ) is linker. The N-acetyltransferase stretch occupies residues 246 to 452 (GVTLADPARI…NWQRPVKIKK (207 aa)). Positions 328 and 346 each coordinate UDP-N-acetyl-alpha-D-glucosamine. Histidine 358 (proton acceptor) is an active-site residue. Residues tyrosine 361 and asparagine 372 each coordinate UDP-N-acetyl-alpha-D-glucosamine. Acetyl-CoA contacts are provided by residues alanine 375, 381–382 (NY), serine 400, alanine 418, and arginine 435.

In the N-terminal section; belongs to the N-acetylglucosamine-1-phosphate uridyltransferase family. This sequence in the C-terminal section; belongs to the transferase hexapeptide repeat family. As to quaternary structure, homotrimer. It depends on Mg(2+) as a cofactor.

It is found in the cytoplasm. It carries out the reaction alpha-D-glucosamine 1-phosphate + acetyl-CoA = N-acetyl-alpha-D-glucosamine 1-phosphate + CoA + H(+). The catalysed reaction is N-acetyl-alpha-D-glucosamine 1-phosphate + UTP + H(+) = UDP-N-acetyl-alpha-D-glucosamine + diphosphate. It participates in nucleotide-sugar biosynthesis; UDP-N-acetyl-alpha-D-glucosamine biosynthesis; N-acetyl-alpha-D-glucosamine 1-phosphate from alpha-D-glucosamine 6-phosphate (route II): step 2/2. The protein operates within nucleotide-sugar biosynthesis; UDP-N-acetyl-alpha-D-glucosamine biosynthesis; UDP-N-acetyl-alpha-D-glucosamine from N-acetyl-alpha-D-glucosamine 1-phosphate: step 1/1. It functions in the pathway bacterial outer membrane biogenesis; LPS lipid A biosynthesis. In terms of biological role, catalyzes the last two sequential reactions in the de novo biosynthetic pathway for UDP-N-acetylglucosamine (UDP-GlcNAc). The C-terminal domain catalyzes the transfer of acetyl group from acetyl coenzyme A to glucosamine-1-phosphate (GlcN-1-P) to produce N-acetylglucosamine-1-phosphate (GlcNAc-1-P), which is converted into UDP-GlcNAc by the transfer of uridine 5-monophosphate (from uridine 5-triphosphate), a reaction catalyzed by the N-terminal domain. This Janthinobacterium sp. (strain Marseille) (Minibacterium massiliensis) protein is Bifunctional protein GlmU.